Consider the following 312-residue polypeptide: Elongation factor Ts (312 aa).

The involved in Mg(2+) ion dislocation from EF-Tu stretch occupies residues 80-83; it reads TDFV.

Belongs to the EF-Ts family.

The protein localises to the cytoplasm. Its function is as follows. Associates with the EF-Tu.GDP complex and induces the exchange of GDP to GTP. It remains bound to the aminoacyl-tRNA.EF-Tu.GTP complex up to the GTP hydrolysis stage on the ribosome. The protein is Elongation factor Ts of Maricaulis maris (strain MCS10) (Caulobacter maris).